We begin with the raw amino-acid sequence, 309 residues long: GTP cyclohydrolase FolE2 (309 aa).

Belongs to the GTP cyclohydrolase IV family.

It catalyses the reaction GTP + H2O = 7,8-dihydroneopterin 3'-triphosphate + formate + H(+). The protein operates within cofactor biosynthesis; 7,8-dihydroneopterin triphosphate biosynthesis; 7,8-dihydroneopterin triphosphate from GTP: step 1/1. Converts GTP to 7,8-dihydroneopterin triphosphate. This chain is GTP cyclohydrolase FolE2, found in Serratia proteamaculans (strain 568).